The following is a 429-amino-acid chain: Methylenetetrahydrofolate--tRNA-(uracil-5-)-methyltransferase TrmFO (429 aa).

Position 7–12 (7–12) interacts with FAD; the sequence is GAGLAG.

This sequence belongs to the MnmG family. TrmFO subfamily. FAD serves as cofactor.

Its subcellular location is the cytoplasm. It carries out the reaction uridine(54) in tRNA + (6R)-5,10-methylene-5,6,7,8-tetrahydrofolate + NADH + H(+) = 5-methyluridine(54) in tRNA + (6S)-5,6,7,8-tetrahydrofolate + NAD(+). The catalysed reaction is uridine(54) in tRNA + (6R)-5,10-methylene-5,6,7,8-tetrahydrofolate + NADPH + H(+) = 5-methyluridine(54) in tRNA + (6S)-5,6,7,8-tetrahydrofolate + NADP(+). Catalyzes the folate-dependent formation of 5-methyl-uridine at position 54 (M-5-U54) in all tRNAs. This chain is Methylenetetrahydrofolate--tRNA-(uracil-5-)-methyltransferase TrmFO, found in Thermosipho melanesiensis (strain DSM 12029 / CIP 104789 / BI429).